A 345-amino-acid polypeptide reads, in one-letter code: Dihydroorotate dehydrogenase (quinone) (345 aa).

Residues A65–K69 and T89 each bind FMN. Position 69 (K69) interacts with substrate. N114–F118 is a substrate binding site. Residues N142 and N175 each coordinate FMN. Position 175 (N175) interacts with substrate. The active-site Nucleophile is the S178. N180 lines the substrate pocket. Positions 220 and 248 each coordinate FMN. Position 249–250 (N249–T250) interacts with substrate. FMN-binding positions include G271, G300, and Y321–T322.

This sequence belongs to the dihydroorotate dehydrogenase family. Type 2 subfamily. As to quaternary structure, monomer. The cofactor is FMN.

Its subcellular location is the cell membrane. It catalyses the reaction (S)-dihydroorotate + a quinone = orotate + a quinol. The protein operates within pyrimidine metabolism; UMP biosynthesis via de novo pathway; orotate from (S)-dihydroorotate (quinone route): step 1/1. Catalyzes the conversion of dihydroorotate to orotate with quinone as electron acceptor. This chain is Dihydroorotate dehydrogenase (quinone), found in Burkholderia ambifaria (strain ATCC BAA-244 / DSM 16087 / CCUG 44356 / LMG 19182 / AMMD) (Burkholderia cepacia (strain AMMD)).